Here is a 759-residue protein sequence, read N- to C-terminus: Fidgetin (759 aa).

Disordered stretches follow at residues 89-111 (SNYS…PWQP), 200-237 (SQAT…PGYN), 258-293 (VGSG…VPGY), and 337-429 (SYGQ…VMSE). 2 stretches are compositionally biased toward pro residues: residues 221-232 (QPPPPPPPPPAL) and 266-289 (GAPP…PPTT). Composition is skewed to polar residues over residues 337–347 (SYGQQRSTQSP) and 382–418 (LMPS…SSES). Thr400 carries the post-translational modification Phosphothreonine. ATP-binding positions include Ala489 and 529-534 (GTGKTL).

The protein belongs to the AAA ATPase family. In terms of assembly, interacts with AKAP8 (via C-terminus). In terms of tissue distribution, widely expressed.

It localises to the nucleus matrix. It is found in the cytoplasm. The protein localises to the cytoskeleton. The protein resides in the microtubule organizing center. Its subcellular location is the centrosome. In terms of biological role, ATP-dependent microtubule severing protein. Severs microtubules along their length and depolymerizes their ends, primarily the minus-end, suppressing microtubule growth from and attachment to centrosomes. Microtubule severing may promote rapid reorganization of cellular microtubule arrays and the release of microtubules from the centrosome following nucleation. Microtubule release from the mitotic spindle poles may allow depolymerization of the microtubule end proximal to the spindle pole, leading to poleward microtubule flux and poleward motion of chromosome. This chain is Fidgetin (Fign), found in Mus musculus (Mouse).